The primary structure comprises 702 residues: Methionine--tRNA ligase (702 aa).

Residues 14–24 (PYANGPVHLGH) carry the 'HIGH' region motif. Zn(2+) is bound by residues Cys146, Cys149, Cys159, and Cys162. The 'KMSKS' region signature appears at 344 to 348 (KFSKS). Residue Lys347 participates in ATP binding. The region spanning 601-702 (EFLKVDLRVA…GKEINGKKIQ (102 aa)) is the tRNA-binding domain.

Belongs to the class-I aminoacyl-tRNA synthetase family. MetG type 1 subfamily. Homodimer. It depends on Zn(2+) as a cofactor.

Its subcellular location is the cytoplasm. It catalyses the reaction tRNA(Met) + L-methionine + ATP = L-methionyl-tRNA(Met) + AMP + diphosphate. Is required not only for elongation of protein synthesis but also for the initiation of all mRNA translation through initiator tRNA(fMet) aminoacylation. This is Methionine--tRNA ligase from Chlorobium phaeobacteroides (strain DSM 266 / SMG 266 / 2430).